Reading from the N-terminus, the 268-residue chain is Ribosomal RNA small subunit methyltransferase A (268 aa).

Asn-10, Ile-12, Gly-37, Glu-58, Asp-83, and Asn-107 together coordinate S-adenosyl-L-methionine.

The protein belongs to the class I-like SAM-binding methyltransferase superfamily. rRNA adenine N(6)-methyltransferase family. RsmA subfamily.

The protein resides in the cytoplasm. It catalyses the reaction adenosine(1518)/adenosine(1519) in 16S rRNA + 4 S-adenosyl-L-methionine = N(6)-dimethyladenosine(1518)/N(6)-dimethyladenosine(1519) in 16S rRNA + 4 S-adenosyl-L-homocysteine + 4 H(+). Functionally, specifically dimethylates two adjacent adenosines (A1518 and A1519) in the loop of a conserved hairpin near the 3'-end of 16S rRNA in the 30S particle. May play a critical role in biogenesis of 30S subunits. The chain is Ribosomal RNA small subunit methyltransferase A from Caldanaerobacter subterraneus subsp. tengcongensis (strain DSM 15242 / JCM 11007 / NBRC 100824 / MB4) (Thermoanaerobacter tengcongensis).